The sequence spans 138 residues: Protein FAM136A (138 aa).

Alanine 2 is subject to N-acetylalanine. Phosphothreonine is present on residues threonine 124 and threonine 126.

It belongs to the FAM136 family.

In Mus musculus (Mouse), this protein is Protein FAM136A (Fam136a).